The following is a 244-amino-acid chain: Salivary gland SP38-40.A protein (244 aa).

An N-terminal signal peptide occupies residues 1 to 21; it reads MRIKFLVVLAVICLFAHYASA. Disordered regions lie at residues 23–91, 137–169, and 206–244; these read GMGG…EKKQ, PPPG…LRKE, and VQGK…DAKK. 2 stretches are compositionally biased toward basic and acidic residues: residues 26 to 86 and 157 to 169; these read GDKK…EVKK and PPKE…LRKE. 2 tandem repeats follow at residues 29–34 and 35–40. A 3 X 6 AA approximate tandem repeats of K-P-K-D-A-P region spans residues 29–47; sequence KPKDAPKPKDAPKPKEVKP. A 1-3; approximate repeat occupies 41 to 47; that stretch reads KPKEVKP. Tandem repeats lie at residues 156–159 and 161–164. Residues 156–168 form a 3 X 4 AA approximate tandem repeats of K-P-P-K region; it reads KPPKEKPPKKLRK. Residues 165 to 168 form a 2-3; approximate repeat; that stretch reads KLRK. Residues 209–224 show a composition bias toward basic residues; that stretch reads KQKKGAKKAKGGKKAA. 3 consecutive repeat copies span residues 225-228, 229-232, and 233-236. The 4 X 4 AA approximate tandem repeats of P-K-[PQ]-[GA] stretch occupies residues 225-240; that stretch reads PKPGPKPGPKQADKPK. Basic and acidic residues predominate over residues 235 to 244; the sequence is QADKPKDAKK. One copy of the 3-4; approximate repeat lies at 237–240; that stretch reads DKPK.

In terms of tissue distribution, salivary gland.

It localises to the secreted. Its function is as follows. Used by the larvae to construct a supramolecular structure, the larval tube. The protein is Salivary gland SP38-40.A protein (SP38-40.A) of Chironomus tentans (Midge).